The sequence spans 40 residues: Photosystem II reaction center protein J (40 aa).

Residues 8–28 (IPLWLIGTVTGIIVIGLLGVF) form a helical membrane-spanning segment.

The protein belongs to the PsbJ family. PSII is composed of 1 copy each of membrane proteins PsbA, PsbB, PsbC, PsbD, PsbE, PsbF, PsbH, PsbI, PsbJ, PsbK, PsbL, PsbM, PsbT, PsbX, PsbY, PsbZ, Psb30/Ycf12, at least 3 peripheral proteins of the oxygen-evolving complex and a large number of cofactors. It forms dimeric complexes.

The protein localises to the plastid. It is found in the chloroplast thylakoid membrane. One of the components of the core complex of photosystem II (PSII). PSII is a light-driven water:plastoquinone oxidoreductase that uses light energy to abstract electrons from H(2)O, generating O(2) and a proton gradient subsequently used for ATP formation. It consists of a core antenna complex that captures photons, and an electron transfer chain that converts photonic excitation into a charge separation. This chain is Photosystem II reaction center protein J, found in Pinus thunbergii (Japanese black pine).